The sequence spans 239 residues: Adenylate dimethylallyltransferase (239 aa).

Belongs to the isopentenyl transferase family.

It carries out the reaction dimethylallyl diphosphate + AMP = N(6)-(dimethylallyl)adenosine 5'-phosphate + diphosphate. In terms of biological role, transfers dimethylallyl groups to AMP as part of the biosynthesis of cytokinin phytohormones. In Rhizobium radiobacter (Agrobacterium tumefaciens), this protein is Adenylate dimethylallyltransferase (ipt).